Here is a 113-residue protein sequence, read N- to C-terminus: Putative membrane protein insertion efficiency factor (113 aa).

It belongs to the UPF0161 family.

It is found in the cell inner membrane. Functionally, could be involved in insertion of integral membrane proteins into the membrane. The polypeptide is Putative membrane protein insertion efficiency factor (Campylobacter curvus (strain 525.92)).